Here is a 370-residue protein sequence, read N- to C-terminus: 3-hydroxy-3-methylglutaryl-CoA lyase, cytoplasmic (370 aa).

A lipid anchor (N-myristoyl glycine) is attached at glycine 2. The region spanning 78 to 345 (VKIVEVGPRD…NTGVNLYKVM (268 aa)) is the Pyruvate carboxyltransferase domain. Residue arginine 86 coordinates substrate. Aspartate 87, histidine 278, and histidine 280 together coordinate a divalent metal cation. Cysteine 311 is an active-site residue. Position 320 (asparagine 320) interacts with a divalent metal cation.

Belongs to the HMG-CoA lyase family. A divalent metal cation serves as cofactor.

It is found in the cytoplasm. The protein localises to the cytosol. The protein resides in the endoplasmic reticulum membrane. The enzyme catalyses (3S)-3-hydroxy-3-methylglutaryl-CoA = acetoacetate + acetyl-CoA. It functions in the pathway metabolic intermediate metabolism; (S)-3-hydroxy-3-methylglutaryl-CoA degradation; acetoacetate from (S)-3-hydroxy-3-methylglutaryl-CoA: step 1/1. Its function is as follows. Non-mitochondrial 3-hydroxy-3-methylglutaryl-CoA lyase that catalyzes a cation-dependent cleavage of (S)-3-hydroxy-3-methylglutaryl-CoA into acetyl-CoA and acetoacetate, a key step in ketogenesis, the products of which support energy production in nonhepatic animal tissues. This chain is 3-hydroxy-3-methylglutaryl-CoA lyase, cytoplasmic (HMGCLL1), found in Homo sapiens (Human).